The primary structure comprises 277 residues: Ribosomal RNA small subunit methyltransferase A (277 aa).

The S-adenosyl-L-methionine site is built by Asn-18, Leu-20, Gly-45, Glu-66, Asp-89, and Asn-110.

This sequence belongs to the class I-like SAM-binding methyltransferase superfamily. rRNA adenine N(6)-methyltransferase family. RsmA subfamily.

It localises to the cytoplasm. It carries out the reaction adenosine(1518)/adenosine(1519) in 16S rRNA + 4 S-adenosyl-L-methionine = N(6)-dimethyladenosine(1518)/N(6)-dimethyladenosine(1519) in 16S rRNA + 4 S-adenosyl-L-homocysteine + 4 H(+). Specifically dimethylates two adjacent adenosines (A1518 and A1519) in the loop of a conserved hairpin near the 3'-end of 16S rRNA in the 30S particle. May play a critical role in biogenesis of 30S subunits. This is Ribosomal RNA small subunit methyltransferase A from Cupriavidus taiwanensis (strain DSM 17343 / BCRC 17206 / CCUG 44338 / CIP 107171 / LMG 19424 / R1) (Ralstonia taiwanensis (strain LMG 19424)).